Reading from the N-terminus, the 208-residue chain is Small ribosomal subunit protein uS4 (208 aa).

One can recognise an S4 RNA-binding domain in the interval 98 to 158; that stretch reads RRLDNVVYRL…EKNRKISVVA (61 aa).

It belongs to the universal ribosomal protein uS4 family. In terms of assembly, part of the 30S ribosomal subunit. Contacts protein S5. The interaction surface between S4 and S5 is involved in control of translational fidelity.

Functionally, one of the primary rRNA binding proteins, it binds directly to 16S rRNA where it nucleates assembly of the body of the 30S subunit. In terms of biological role, with S5 and S12 plays an important role in translational accuracy. This Lawsonia intracellularis (strain PHE/MN1-00) protein is Small ribosomal subunit protein uS4.